Here is a 352-residue protein sequence, read N- to C-terminus: Dof zinc finger protein DOF1.8 (352 aa).

Residues 24-46 (LKQQSNPPSPATPVERKARPEKD) are disordered. Residues 37-46 (VERKARPEKD) show a composition bias toward basic and acidic residues. A Dof-type zinc finger spans residues 49–103 (LNCPRCNSLNTKFCYYNNYSLTQPRYFCKDCRRYWTAGGSLRNIPVGGGVRKNKR). Zn(2+)-binding residues include C51, C54, C76, and C79. Disordered stretches follow at residues 93–136 (PVGG…PLPH) and 265–334 (GGDP…VGFW). The segment covering 104–129 (SSSNSSSSSPSSSSSSKKPLFANNNT) has biased composition (low complexity). Residues 310–323 (ENNDEHSDHEHEKE) are compositionally biased toward basic and acidic residues.

The protein localises to the nucleus. In terms of biological role, transcription factor that binds specifically to a 5'-AA[AG]G-3' consensus core sequence. This is Dof zinc finger protein DOF1.8 (DOF1.8) from Arabidopsis thaliana (Mouse-ear cress).